We begin with the raw amino-acid sequence, 836 residues long: Ethylene receptor 3 (836 aa).

3 helical membrane-spanning segments follow: residues Leu137–Arg157, Leu166–Thr186, and Leu204–Leu224. 2 residues coordinate Cu cation: Cys176 and His180. Positions Asp269–Leu413 constitute a GAF domain. A coiled-coil region spans residues Ala416–Ala452. In terms of domain architecture, Histidine kinase spans Met457–Pro691. Residues Leu718–Gln834 enclose the Response regulatory domain.

This sequence belongs to the ethylene receptor family. Requires Cu cation as cofactor.

It localises to the endoplasmic reticulum membrane. The enzyme catalyses ATP + protein L-histidine = ADP + protein N-phospho-L-histidine.. In terms of biological role, ethylene receptor related to bacterial two-component regulators. Acts as a negative regulator of ethylene signaling. May delay the transition from the vegetative stage to the floral stage by up-regulating GI (GIGANTEA) and RCN1 and cause starch accumulation in stems by down-regulating the alpha-amylase AMY3D. This Oryza sativa subsp. indica (Rice) protein is Ethylene receptor 3.